The sequence spans 440 residues: MDTDILKMQDREVFDAIAGETVRQMETLELIASENFTSRAVMQACGSVMTNKYAEGYPGKRYYGGCEFVDIAEDLARERARKLFGCEYVNVQPHSGSSANMAVLFSVLKPGDRIMGLDLSHGGHLTHGSSVNFSGQMFDARSYGVDRETGIIDMNKVEEMALDFKPRLIICGASAYSQGFDFKAFREIADKVGAFLMADIAHPAGLIAAGLLTDPMPHCHFVTTTTHKTLRGPRGGMIMMGKDFENPMGITIKTKNGPRVKMMSEVMDAEVMPGIQGGPLMHIIAGKAVAFGEALRPEFREYAVQVRKNAASMAERFTSLGYNIVSGGTKNHLMLLDLRNKDVNGKVAENLLHDAGITVNKNMVPFDDKSPFVTSGIRIGTAAMTTRGMKEADATLIAELIDRVITGAAESTIAATCKDVKAEIRSLCLQNPLEGYGVTP.

Residues L119 and 123-125 (GHL) each bind (6S)-5,6,7,8-tetrahydrofolate. An N6-(pyridoxal phosphate)lysine modification is found at K228. 370–372 (SPF) is a binding site for (6S)-5,6,7,8-tetrahydrofolate.

This sequence belongs to the SHMT family. As to quaternary structure, homodimer. It depends on pyridoxal 5'-phosphate as a cofactor.

The protein localises to the cytoplasm. The enzyme catalyses (6R)-5,10-methylene-5,6,7,8-tetrahydrofolate + glycine + H2O = (6S)-5,6,7,8-tetrahydrofolate + L-serine. Its pathway is one-carbon metabolism; tetrahydrofolate interconversion. It participates in amino-acid biosynthesis; glycine biosynthesis; glycine from L-serine: step 1/1. In terms of biological role, catalyzes the reversible interconversion of serine and glycine with tetrahydrofolate (THF) serving as the one-carbon carrier. This reaction serves as the major source of one-carbon groups required for the biosynthesis of purines, thymidylate, methionine, and other important biomolecules. Also exhibits THF-independent aldolase activity toward beta-hydroxyamino acids, producing glycine and aldehydes, via a retro-aldol mechanism. In Chlorobium luteolum (strain DSM 273 / BCRC 81028 / 2530) (Pelodictyon luteolum), this protein is Serine hydroxymethyltransferase.